A 210-amino-acid polypeptide reads, in one-letter code: Ribosomal RNA small subunit methyltransferase G (210 aa).

S-adenosyl-L-methionine-binding positions include glycine 76, methionine 81, 127–128, and arginine 145; that span reads VE.

This sequence belongs to the methyltransferase superfamily. RNA methyltransferase RsmG family.

It localises to the cytoplasm. It catalyses the reaction guanosine(527) in 16S rRNA + S-adenosyl-L-methionine = N(7)-methylguanosine(527) in 16S rRNA + S-adenosyl-L-homocysteine. Functionally, specifically methylates the N7 position of guanine in position 527 of 16S rRNA. The polypeptide is Ribosomal RNA small subunit methyltransferase G (Acinetobacter baumannii (strain SDF)).